The primary structure comprises 248 residues: Triosephosphate isomerase (248 aa).

Position 9–11 (9–11 (NWK)) interacts with substrate. Histidine 94 (electrophile) is an active-site residue. Glutamate 166 functions as the Proton acceptor in the catalytic mechanism. Substrate-binding positions include glycine 172, serine 211, and 232 to 233 (GG).

Belongs to the triosephosphate isomerase family. As to quaternary structure, homodimer.

Its subcellular location is the cytoplasm. The catalysed reaction is D-glyceraldehyde 3-phosphate = dihydroxyacetone phosphate. It participates in carbohydrate biosynthesis; gluconeogenesis. The protein operates within carbohydrate degradation; glycolysis; D-glyceraldehyde 3-phosphate from glycerone phosphate: step 1/1. Involved in the gluconeogenesis. Catalyzes stereospecifically the conversion of dihydroxyacetone phosphate (DHAP) to D-glyceraldehyde-3-phosphate (G3P). This chain is Triosephosphate isomerase, found in Vesicomyosocius okutanii subsp. Calyptogena okutanii (strain HA).